We begin with the raw amino-acid sequence, 159 residues long: Endoribonuclease YbeY (159 aa).

Zn(2+)-binding residues include histidine 117, histidine 121, and histidine 127.

This sequence belongs to the endoribonuclease YbeY family. It depends on Zn(2+) as a cofactor.

Its subcellular location is the cytoplasm. Functionally, single strand-specific metallo-endoribonuclease involved in late-stage 70S ribosome quality control and in maturation of the 3' terminus of the 16S rRNA. The protein is Endoribonuclease YbeY of Azorhizobium caulinodans (strain ATCC 43989 / DSM 5975 / JCM 20966 / LMG 6465 / NBRC 14845 / NCIMB 13405 / ORS 571).